The chain runs to 3032 residues: DmX-like protein 2 (3032 aa).

WD repeat units follow at residues 108–145 (FLSS…ILEE), 167–207 (KTSV…KSSI), and 230–278 (AHPR…EDCL). Serine 326 carries the post-translational modification Phosphoserine. The disordered stretch occupies residues 418-486 (QLDHESDDAD…HPRPSISMPL (69 aa)). Positions 422–434 (ESDDADREDEERS) are enriched in acidic residues. Over residues 435–474 (QDERERGLRMKLDHELSLDRESEAGTGSSEHEDGEREGSP) the composition is skewed to basic and acidic residues. Serine 473 carries the phosphoserine modification. Residues 492 to 532 (DRKIETLLTEWNKNPDMLFTIHPVDGTFLVWHVKYLDEYNP) form a WD 4 repeat. The segment at 577–598 (PSQQEMMSVDSPHGSQLHSPSH) is disordered. Serine 587 bears the Phosphoserine mark. Residues 589–598 (HGSQLHSPSH) show a composition bias toward polar residues. 3 WD repeats span residues 594–633 (HSPS…KSAF), 750–802 (LHTS…RKLL), and 879–921 (QPSQ…VQAC). The disordered stretch occupies residues 937 to 958 (VPGQKNLDSSPETSSSMSSVPH). Serine 945 and serine 946 each carry phosphoserine. Positions 945-958 (SSPETSSSMSSVPH) are enriched in low complexity. Residues 1001-1038 (LSSSSIYPVCLAPYLVVTTCSDNKVRFWKCCMETNSLG) form a WD 8 repeat. Residues serine 1141, serine 1144, and serine 1152 each carry the phosphoserine modification. WD repeat units lie at residues 1164–1205 (PNIK…VSDQ) and 1245–1285 (GTPS…GNVD). 2 positions are modified to phosphoserine: serine 1288 and serine 1399. Phosphothreonine is present on threonine 1416. Positions 1443–1464 (RISEDSTKKPQSYEDHIESQSE) are disordered. Basic and acidic residues predominate over residues 1444–1461 (ISEDSTKKPQSYEDHIES). Serine 1856 carries the post-translational modification Phosphoserine. The tract at residues 1922 to 1953 (QLDSVSGRMENGPSESKPVSRSDGGSGADWSA) is disordered. Threonine 2017 carries the post-translational modification Phosphothreonine. The stretch at 2117–2146 (GSYERHQIERRRLQAKREHAERRKLWLQKN) forms a coiled coil. Phosphoserine is present on residues serine 2394 and serine 2636. A compositionally biased stretch (low complexity) spans 2722 to 2732 (QPGAASHSSSQ). The segment at 2722-2744 (QPGAASHSSSQPHPPPSLPWLGS) is disordered. WD repeat units lie at residues 2757–2796 (RNLH…QLVC), 2800–2839 (AGNA…SNPK), 2846–2888 (CHSK…GNSL), 2894–2933 (CHDH…LIHT), 2936–2975 (AHDS…LIHS), and 2988–3026 (NIGA…NIPN).

Interacts with MADD and RAB3GAP. Expressed in the brain and pituitary gland. Detected in the hippocampus, dentate gyrus, hypothalamus, pyriform cortex and the granular and molecular layers of the cerebellum of adult animals. In the hypothalamus, expression is observed in the arcuate nucleus, the ME, the organum vasculosum of the lamina terminalis, and the subfornical organ, the subcommissural organ, and the suprachiasmatic nucleus. Both tanycytes and hypothalamic neurosecretory neurons express the protein. Expressed in the inner and outer hair cells as well as in the spiral ganglion neurons. Expressed in insulin-secreting cells of the islets of Langerhans in the pancreas.

The protein localises to the cytoplasmic vesicle. The protein resides in the secretory vesicle. It is found in the synaptic vesicle membrane. It localises to the neuronal dense core vesicle. Its function is as follows. May serve as a scaffold protein for MADD and RAB3GA on synaptic vesicles of neuronal and endocrine homeostatic processes. Plays a role in the brain as a key controller of neuronal and endocrine homeostatic processes. The chain is DmX-like protein 2 (Dmxl2) from Mus musculus (Mouse).